The primary structure comprises 345 residues: Protein Tob1 (345 aa).

Positions 22–39 match the Bipartite nuclear localization signal motif; that stretch reads RRRVNIFGEELERLLKKK. An important for nuclear localization region spans residues 82–92; it reads VRGNLPQDLSV. The span at 144 to 160 shows a compositional bias: low complexity; sequence DPASSVSSSPSPPFGHS. Positions 144–171 are disordered; that stretch reads DPASSVSSSPSPPFGHSAAVSPTFMPRS. Residues 161-218 are required for interaction with CPEB3; sequence AAVSPTFMPRSTQPLTFTTATFAATKFGSTKMKNSGRSNKVARTSPINLGLNVNDLLK. The residue at position 204 (T204) is a Phosphothreonine. The short motif at 226-234 is the Nuclear export signal element; the sequence is MHSLYGLGL. The interval 231 to 267 is disordered; that stretch reads GLGLGSQQQPQQQQQPAQPPPPPPPPQQQQQQKTSAL. A compositionally biased stretch (low complexity) spans 237 to 246; the sequence is QQQPQQQQQP. The span at 247–257 shows a compositional bias: pro residues; that stretch reads AQPPPPPPPPQ.

Belongs to the BTG family. Interacts with ERBB2. Interacts with CNOT7. Interacts with CPEB3 (via C-terminal RNA-binding region); recruits CNOT7 to CPEB3 to form a ternary complex required for mRNA deadenylation and decay. Interacts with CNOT8. Interacts with CPEB4. Phosphorylated on Ser and Thr residues. Ubiquitous.

The protein resides in the cytoplasm. Its subcellular location is the nucleus. Functionally, anti-proliferative protein; the function is mediated by association with deadenylase subunits of the CCR4-NOT complex. Mediates CPEB3-accelerated mRNA deadenylation by binding to CPEB3 and recruiting CNOT7 which leads to target mRNA deadenylation and decay. This is Protein Tob1 (TOB1) from Homo sapiens (Human).